Reading from the N-terminus, the 595-residue chain is Sorting nexin-9 (595 aa).

Residues 1–62 (MATKARVMYD…PTDYVEILPN (62 aa)) enclose the SH3 domain. A compositionally biased stretch (low complexity) spans 89–100 (QTNSSSANSNNQ). Positions 89 to 199 (QTNSSSANSN…QRGNSRAGAS (111 aa)) are disordered. A Phosphoserine modification is found at Ser-121. Residues 129-144 (TDGTSAQRNSSANNWD) are compositionally biased toward polar residues. The span at 159–169 (GDDDEWDEDWD) shows a compositional bias: acidic residues. Ser-200 is modified (phosphoserine). Residues 201–213 (MKLPLNKFPGFAK) are critical for tubulation activity. Tyr-239 bears the Phosphotyrosine mark. The PX domain occupies 250-360 (FDCVVADPRK…QQFLNFRDEK (111 aa)). Residues Arg-286, Lys-288, and Arg-327 each coordinate a 1,2-diacyl-sn-glycero-3-phospho-(1D-myo-inositol-4,5-bisphosphate). At Lys-288 the chain carries N6-acetyllysine. Residues 392 to 595 (LIEIEQKCDA…RQALSRFPVM (204 aa)) enclose the BAR domain.

The protein belongs to the sorting nexin family. As to quaternary structure, homodimer, and homooligomer. Heterodimer with SNX18. Interacts with ITCH. Interacts (via SH3 domain) with TNK2, WASL and ACTR3. Identified in a complex with TNK2 and clathrin heavy chains. Identified in a complex with the AP-2 complex, clathrin and DNM2. Interacts (via SH3 domain) with DNM1 and DNM2. Identified in an oligomeric complex containing DNM1 and SNX9. Interacts with FCHSD1. Interacts with ADAM9 and ADAM15 cytoplasmic tails. Phosphorylated on tyrosine residues by TNK2. Phosphorylation promotes its activity in the degradation of EGFR. In terms of processing, ubiquitinated by ITCH. As to expression, detected in inner ear vestibula and in the cuticular plate of cochlear hair cells (at protein level).

It is found in the cytoplasmic vesicle membrane. The protein resides in the cell membrane. It localises to the cytoplasmic vesicle. The protein localises to the clathrin-coated vesicle. Its subcellular location is the golgi apparatus. It is found in the trans-Golgi network. The protein resides in the cell projection. It localises to the ruffle. The protein localises to the cytoplasm. Functionally, involved in endocytosis and intracellular vesicle trafficking, both during interphase and at the end of mitosis. Required for efficient progress through mitosis and cytokinesis. Required for normal formation of the cleavage furrow at the end of mitosis. Plays a role in endocytosis via clathrin-coated pits, but also clathrin-independent, actin-dependent fluid-phase endocytosis. Plays a role in macropinocytosis. Promotes internalization of TNFR. Promotes degradation of EGFR after EGF signaling. Stimulates the GTPase activity of DNM1. Promotes DNM1 oligomerization. Promotes activation of the Arp2/3 complex by WASL, and thereby plays a role in the reorganization of the F-actin cytoskeleton. Binds to membranes enriched in phosphatidylinositol 4,5-bisphosphate and promotes membrane tubulation. Has lower affinity for membranes enriched in phosphatidylinositol 3-phosphate. This chain is Sorting nexin-9 (Snx9), found in Mus musculus (Mouse).